Reading from the N-terminus, the 66-residue chain is Large ribosomal subunit protein bL31 (66 aa).

The Zn(2+) site is built by cysteine 16, cysteine 18, cysteine 36, and cysteine 39.

Belongs to the bacterial ribosomal protein bL31 family. Type A subfamily. As to quaternary structure, part of the 50S ribosomal subunit. Zn(2+) serves as cofactor.

Its function is as follows. Binds the 23S rRNA. The protein is Large ribosomal subunit protein bL31 of Geobacter metallireducens (strain ATCC 53774 / DSM 7210 / GS-15).